The following is a 273-amino-acid chain: Hemin import ATP-binding protein HmuV (273 aa).

One can recognise an ABC transporter domain in the interval L2–A256. G34–S41 lines the ATP pocket.

Belongs to the ABC transporter superfamily. Heme (hemin) importer (TC 3.A.1.14.5) family. As to quaternary structure, the complex is composed of two ATP-binding proteins (HmuV), two transmembrane proteins (HmuU) and a solute-binding protein (HmuT).

It localises to the cell inner membrane. Part of the ABC transporter complex HmuTUV involved in hemin import. Responsible for energy coupling to the transport system. The protein is Hemin import ATP-binding protein HmuV of Burkholderia lata (strain ATCC 17760 / DSM 23089 / LMG 22485 / NCIMB 9086 / R18194 / 383).